Here is a 195-residue protein sequence, read N- to C-terminus: Interferon tau-9 (195 aa).

An N-terminal signal peptide occupies residues 1–23 (MAFVLSLLMALVLVSYGPGGSLG). Cystine bridges form between C24–C122 and C52–C162.

It belongs to the alpha/beta interferon family. IFN-alphaII subfamily. In terms of tissue distribution, constitutively and exclusively expressed in the mononuclear cells of the extraembryonic trophectoderm.

It is found in the secreted. Paracrine hormone primarily responsible for maternal recognition of pregnancy. Interacts with endometrial receptors, probably type I interferon receptors, and blocks estrogen receptor expression, preventing the estrogen-induced increase in oxytocin receptor expression in the endometrium. This results in the suppression of the pulsatile endometrial release of the luteolytic hormone prostaglandin F2-alpha, hindering the regression of the corpus luteum (luteolysis) and therefore a return to ovarian cyclicity. This, and a possible direct effect of IFN-tau on prostaglandin synthesis, leads in turn to continued ovarian progesterone secretion, which stimulates the secretion by the endometrium of the nutrients required for the growth of the conceptus. In summary, displays particularly high antiviral and antiproliferative potency concurrently with particular weak cytotoxicity, high antiluteolytic activity and immunomodulatory properties. In contrast with other IFNs, IFN-tau is not virally inducible. This is Interferon tau-9 (IFNT9) from Ovis aries (Sheep).